Here is a 198-residue protein sequence, read N- to C-terminus: Large ribosomal subunit protein uL23c (198 aa).

The N-terminal 76 residues, 1 to 76, are a transit peptide targeting the chloroplast; sequence MATTAPNLHS…SFGRDLMVAQ (76 aa).

It belongs to the universal ribosomal protein uL23 family. As to quaternary structure, component of the chloroplast large ribosomal subunit (LSU). Mature 70S chloroplast ribosomes of higher plants consist of a small (30S) and a large (50S) subunit. The 30S small subunit contains 1 molecule of ribosomal RNA (16S rRNA) and 24 different proteins. The 50S large subunit contains 3 rRNA molecules (23S, 5S and 4.5S rRNA) and 33 different proteins.

It localises to the plastid. The protein resides in the chloroplast. Its function is as follows. Component of the chloroplast ribosome (chloro-ribosome), a dedicated translation machinery responsible for the synthesis of chloroplast genome-encoded proteins, including proteins of the transcription and translation machinery and components of the photosynthetic apparatus. The polypeptide is Large ribosomal subunit protein uL23c (RPL23) (Spinacia oleracea (Spinach)).